A 152-amino-acid polypeptide reads, in one-letter code: UPF0225 protein YchJ (152 aa).

Belongs to the UPF0225 family.

The protein is UPF0225 protein YchJ of Shigella dysenteriae serotype 1 (strain Sd197).